The chain runs to 428 residues: GTPase Obg (428 aa).

Residues 1–158 enclose the Obg domain; that stretch reads MFIDEVIITV…IKVKLELKLL (158 aa). The OBG-type G domain occupies 159 to 330; that stretch reads ADVALVGYPS…ILYKTYDMLS (172 aa). Residues 165-172, 190-194, 212-215, 282-285, and 311-313 contribute to the GTP site; these read GYPSVGKS, FTTLE, DIPG, NKMD, and SVL. Mg(2+)-binding residues include Ser172 and Thr192. Residues 349-428 form the OCT domain; sequence ELKIEKEDFE…IADVEFEYFE (80 aa).

This sequence belongs to the TRAFAC class OBG-HflX-like GTPase superfamily. OBG GTPase family. Monomer. Mg(2+) serves as cofactor.

It is found in the cytoplasm. Its function is as follows. An essential GTPase which binds GTP, GDP and possibly (p)ppGpp with moderate affinity, with high nucleotide exchange rates and a fairly low GTP hydrolysis rate. Plays a role in control of the cell cycle, stress response, ribosome biogenesis and in those bacteria that undergo differentiation, in morphogenesis control. This chain is GTPase Obg, found in Fusobacterium nucleatum subsp. nucleatum (strain ATCC 25586 / DSM 15643 / BCRC 10681 / CIP 101130 / JCM 8532 / KCTC 2640 / LMG 13131 / VPI 4355).